The chain runs to 642 residues: MATDTQKETLGFQTEVKQLLHLMIHSLYSNKEIFLRELISNASDAVDKLRFESVANADLLAEDPNLRVRIEFDKDTNTVVIDDNGVGMSREEAITNLGTIAKSGTSAFLEQLSGDQKKDSQLIGQFGVGFYSAFIVADKVTVETRRAGVAADQAVRWVSDGSGEFTIENIEKDSRGTRIILHLKAGEKEFADNFRLRHLVTKYSDHISIPVEMEKPVYPEMDEEGNPKPVDENKAPEYEAVNSAKALWTRPRNEVTDEEYQEFYKHISHDYQEPLKWSHNKVEGKLEYSSLLYIPSKAPYDLWNRDMQRGLKLYVQRVFIMDEAEAFLPPYMRFVKGVVDSNDLSLNVSREILQNDHAVDSMRSALTKRVLDMLGKMAKNEPEDYQKFWDEFGNVIKEGPADDMGNKDKIAGLLRFSSTHTDAAAQTVSLADYIERMQEGQDKIYYIYAESHNTAKNSPHLEILRKKGFEVLLLSDRIDEWMMSSLQEFEGKSFQDVTKGKLDLADQENEEEKKEKEEKAEKMKPLLDRMKAVLNEKVAGVNSTDRLTNSPACLVVGEYDMGLQMRRLLEQAGQKLPESKPTLEVNPDHPIVAKMDSETDEERFADMAWLLFEQATLSEGGQLEDPATFVSRMNKLIVQLSK.

The tract at residues 1 to 350 (MATDTQKETL…SNDLSLNVSR (350 aa)) is a; substrate-binding. Residues 351-567 (EILQNDHAVD…EYDMGLQMRR (217 aa)) are b. The interval 568–642 (LLEQAGQKLP…MNKLIVQLSK (75 aa)) is c.

The protein belongs to the heat shock protein 90 family. As to quaternary structure, homodimer.

The protein localises to the cytoplasm. Molecular chaperone. Has ATPase activity. This chain is Chaperone protein HtpG, found in Marinomonas sp. (strain MWYL1).